Here is a 3010-residue protein sequence, read N- to C-terminus: Genome polyprotein (3010 aa).

Position 2 is an N-acetylserine; by host (serine 2). The segment at 2-23 (STNPKPQRKTKRNTNRRPQDVK) is interaction with STAT1. Positions 2–58 (STNPKPQRKTKRNTNRRPQDVKFPGGGQIVGGVYLLPRRGPRLGVRATRKTSERSQP) are interaction with EIF2AK2/PKR. An interaction with DDX3X region spans residues 2–59 (STNPKPQRKTKRNTNRRPQDVKFPGGGQIVGGVYLLPRRGPRLGVRATRKTSERSQPR). Positions 2 to 75 (STNPKPQRKT…PKARQPEGRA (74 aa)) are disordered. The Cytoplasmic segment spans residues 2–168 (STNPKPQRKT…EDGVNYATGN (167 aa)). 2 consecutive short sequence motifs (nuclear localization signal) follow at residues 5-13 (PKPQRKTKR) and 38-43 (PRRGPR). A compositionally biased stretch (basic residues) spans 7 to 16 (PQRKTKRNTN). Over residues 32 to 47 (GGVYLLPRRGPRLGVR) the composition is skewed to low complexity. Residue serine 53 is modified to Phosphoserine; by host. 2 short sequence motifs (nuclear localization signal) span residues 58 to 64 (PRGRRQP) and 66 to 71 (PKARQP). At serine 99 the chain carries Phosphoserine; by host. An important for endoplasmic reticulum and mitochondrial localization region spans residues 112-152 (PRRRSRNLGKVIDTLTCGFADLMGYIPLVGAPLGGVARALA). The residue at position 116 (serine 116) is a Phosphoserine; by host PKA. The interaction with APOA2 stretch occupies residues 122-173 (VIDTLTCGFADLMGYIPLVGAPLGGVARALAHGVRVVEDGVNYATGNLPGCS). The important for lipid droplets localization stretch occupies residues 164–167 (YATG). The chain crosses the membrane as a helical span at residues 169-189 (LPGCSFSIFLLALLSCLTIPA). Residues 178–191 (LLALLSCLTIPASA) constitute a propeptide, ER anchor for the core protein, removed in mature form by host signal peptidase. At 190–358 (SAYEVRNVSG…AGAHWGVLAG (169 aa)) the chain is on the lumenal side. Residues asparagine 196, asparagine 209, asparagine 234, and asparagine 250 are each glycosylated (N-linked (GlcNAc...) asparagine; by host). The interval 265–296 (LVGAAAFCSAMYVGDLCGSVFLVSQLFTFSPR) is important for fusion. A glycan (N-linked (GlcNAc...) asparagine; by host) is linked at asparagine 305. The helical transmembrane segment at 359–379 (LAYYSMVGNWAKVLIVMLLFA) threads the bilayer. The Lumenal segment spans residues 380 to 725 (GVDGETRVTG…WDYIVILFLL (346 aa)). An HVR1 region spans residues 385 to 411 (TRVTGGQIARNAYSLTTLFSSGSAQNI). 4 N-linked (GlcNAc...) (high mannose) asparagine; by host glycosylation sites follow: asparagine 417, asparagine 423, asparagine 430, and asparagine 448. Cystine bridges form between cysteine 429/cysteine 552, cysteine 452/cysteine 459, cysteine 486/cysteine 494, and cysteine 503/cysteine 508. Residues 474 to 479 (YAEQGG) are HVR2. The interval 480-493 (QDQRPYCWHYAPKP) is CD81-binding 1. An N-linked (GlcNAc...) (high mannose) asparagine; by host glycan is attached at asparagine 532. N-linked (GlcNAc...) asparagine; by host glycosylation is present at asparagine 540. Residues 544 to 551 (PPQGNWFG) are CD81-binding 2. N-linked (GlcNAc...) (high mannose) asparagine; by host glycosylation is present at asparagine 556. Cysteine 564 and cysteine 569 are joined by a disulfide. An N-linked (GlcNAc...) (high mannose) asparagine; by host glycan is attached at asparagine 576. 3 cysteine pairs are disulfide-bonded: cysteine 581–cysteine 585, cysteine 597–cysteine 620, and cysteine 607–cysteine 644. Residues asparagine 623 and asparagine 645 are each glycosylated (N-linked (GlcNAc...) (high mannose) asparagine; by host). Residues cysteine 652 and cysteine 677 are joined by a disulfide bond. A PKR/eIF2-alpha phosphorylation homology domain (PePHD) region spans residues 660–671 (LELSPLLLSTTE). The helical transmembrane segment at 726–746 (LADARVCACLWMMLLIAQAEA) threads the bilayer. At 747 to 757 (ALENLVVLNAA) the chain is on the lumenal side. The chain crosses the membrane as a helical span at residues 758 to 778 (SVAGAHGILSFLVFFCAAWYI). The Cytoplasmic segment spans residues 779–781 (KGK). A helical membrane pass occupies residues 782–803 (LVPGAAYAFYGVWPLLLLLLAL). The Lumenal segment spans residues 804–813 (PPRAYAMERE). A helical membrane pass occupies residues 814–834 (MAASCGGAVFVGLVLLTLSPY). Topologically, residues 835-838 (YKEF) are cytoplasmic. Residues 839–859 (LARLIWWLQYFITRAEAHLQV) traverse the membrane as a helical segment. Over 860-881 (WIPPLNIRGGRDAIILLACVVH) the chain is Lumenal. A helical membrane pass occupies residues 882–902 (PELIFDITKLLLAILGPLMVL). The 124-residue stretch at 903–1026 (QASITQVPYF…SLEGQGWRLL (124 aa)) folds into the Peptidase C18 domain. The Cytoplasmic portion of the chain corresponds to 903–1657 (QASITQVPYF…CMSADLEVVT (755 aa)). Residues 904-1206 (ASITQVPYFV…PVESMETTMR (303 aa)) form a protease NS2-3 region. Residue cysteine 922 is the site of S-palmitoyl cysteine; by host attachment. The segment at 929–949 (AGGHYVQMAFVKLTALTGTYV) is interaction with host SCPS1. Active-site for protease NS2 activity; shared with dimeric partner residues include histidine 952, glutamate 972, and cysteine 993. Residues 1027-1208 (APITAYSQQT…ESMETTMRSP (182 aa)) form the Peptidase S29 domain. Active-site charge relay system; for serine protease NS3 activity residues include histidine 1083 and aspartate 1107. Cysteine 1123 and cysteine 1125 together coordinate Zn(2+). Serine 1165 serves as the catalytic Charge relay system; for serine protease NS3 activity. Residues cysteine 1171 and histidine 1175 each coordinate Zn(2+). Residues 1217-1369 (PAVPQTFQVA…PNIEEVALSN (153 aa)) enclose the Helicase ATP-binding domain. Residue 1230–1237 (APTGSGKS) coordinates ATP. Residues serine 1237 and glutamate 1317 each coordinate Mg(2+). The DECH box signature appears at 1316 to 1319 (DECH). Residues 1486–1497 (QRRGRTGRGRRG) form an RNA-binding region. The helical transmembrane segment at 1658–1678 (STWVLVGGVLAALAAYCLTTG) threads the bilayer. The segment at 1679–1690 (SVVIVGRIILSG) is NS3-binding. The Cytoplasmic segment spans residues 1679-1805 (SVVIVGRIIL…SITSPLSTQN (127 aa)). A helical membrane pass occupies residues 1806–1824 (TLLFNIWGGWVAAQLAPPS). Over 1825–1828 (AASA) the chain is Lumenal. Residues 1829 to 1849 (FVGAGIAGAAVGSIGLGKVLV) traverse the membrane as a helical segment. A topological domain (cytoplasmic) is located at residue aspartate 1850. The helical transmembrane segment at 1851–1871 (ILAGYGAGVAGALVAFKIMSG) threads the bilayer. Residues 1872–1881 (EVPSTEDLVN) lie on the Lumenal side of the membrane. A helical transmembrane segment spans residues 1882-1902 (LLPAILSPGALVVGVVCAAIL). At 1903–1972 (RRHVGPGEGA…WINEDCSTPC (70 aa)) the chain is on the cytoplasmic side. 2 S-palmitoyl cysteine; by host lipidation sites follow: cysteine 1968 and cysteine 1972. An intramembrane segment occupies 1973-2002 (SGSWLRDVWDWICTVLTDFKTWLQSKLLPR). Residues 2003–2989 (LPGVPFFSCQ…YHSLSRARPR (987 aa)) lie on the Cytoplasmic side of the membrane. 4 residues coordinate Zn(2+): cysteine 2011, cysteine 2029, cysteine 2031, and cysteine 2052. The FKBP8-binding stretch occupies residues 2120–2208 (EFFTEVDGVR…ASSSASQLSA (89 aa)). The tract at residues 2120 to 2332 (EFFTEVDGVR…PIPPPRRKRT (213 aa)) is transcriptional activation. The segment at 2135–2139 (PACKP) is interaction with non-structural protein 4A. Positions 2189-2441 (RLARGSPPSL…PCAAEESKLP (253 aa)) are interaction with host SKP2. Serine 2194 is subject to Phosphoserine; by host; in p56. 5 positions are modified to phosphoserine; by host; in p58: serine 2197, serine 2201, serine 2204, serine 2207, and serine 2210. The interval 2210 to 2249 (SLKATCTTHHDSPDVDLIEANLLWRQEMGGNITRVESENK) is ISDR. An interaction with EIF2AK2/PKR region spans residues 2210-2275 (SLKATCTTHH…REPSVAAEIL (66 aa)). The tract at residues 2249–2306 (KVVILDSFDPLRAEEDEREPSVAAEILRKTKRFPPAMPIWARPDYNPPLLESWKDPDY) is NS4B-binding. The SH3-binding motif lies at 2322-2325 (PPIP). A Nuclear localization signal motif is present at residues 2326 to 2334 (PPRRKRTVV). Lysine 2350 participates in a covalent cross-link: Glycyl lysine isopeptide (Lys-Gly) (interchain with G-Cter in ubiquitin). A compositionally biased stretch (polar residues) spans 2351-2365 (TFGSSGSSAVDSGTA). The interval 2351–2407 (TFGSSGSSAVDSGTATAPPDQASDDGDQGSDVESYSSMPPLEGEPGDPDLSDGSWST) is disordered. The interval 2354–2377 (SSGSSAVDSGTATAPPDQASDDGD) is V3. Residues serine 2448 and serine 2461 each carry the phosphoserine; by host modification. Residues 2633–2751 (PMGFSYDTRC…ICESAGTQED (119 aa)) form the RdRp catalytic domain. 3 residues coordinate Mg(2+): aspartate 2639, aspartate 2737, and aspartate 2738. A helical membrane pass occupies residues 2990–3010 (WFMLCLLLLSVGVGIYLLPNR).

Belongs to the hepacivirus polyprotein family. In terms of assembly, homooligomer. Interacts with E1 (via C-terminus). Interacts with the non-structural protein 5A. Interacts (via N-terminus) with host STAT1 (via SH2 domain); this interaction results in decreased STAT1 phosphorylation and ubiquitin-mediated proteasome-dependent STAT1 degradation, leading to decreased IFN-stimulated gene transcription. Interacts with host STAT3; this interaction constitutively activates STAT3. Interacts with host LTBR receptor. Interacts with host TNFRSF1A receptor and possibly induces apoptosis. Interacts with host HNRPK. Interacts with host YWHAE. Interacts with host UBE3A/E6AP. Interacts with host DDX3X. Interacts with host APOA2. Interacts with host RXRA protein. Interacts with host SP110 isoform 3/Sp110b; this interaction sequesters the transcriptional corepressor SP110 away from the nucleus. Interacts with host CREB3 nuclear transcription protein; this interaction triggers cell transformation. Interacts with host ACY3. Interacts with host C1QR1. Interacts with host RBM24; this interaction, which enhances the interaction of the mature core protein with 5'-UTR, may inhibit viral translation and favor replication. Interacts with host EIF2AK2/PKR; this interaction induces the autophosphorylation of EIF2AK2. Part of the viral assembly initiation complex composed of NS2, E1, E2, NS3, NS4A, NS5A and the mature core protein. As to quaternary structure, forms a heterodimer with envelope glycoprotein E2. Interacts with mature core protein. Interacts with protease NS2. The heterodimer E1/E2 interacts with host CLDN1; this interaction plays a role in viral entry into host cell. Interacts with host SPSB2 (via C-terminus). Part of the viral assembly initiation complex composed of NS2, E1, E2, NS3, NS4A, NS5A and the mature core protein. Interacts with host NEURL3; this interaction prevents E1 binding to glycoprotein E2. Forms a heterodimer with envelope glycoprotein E1. Interacts with host CD81 and SCARB1 receptors; these interactions play a role in viral entry into host cell. Interacts with host EIF2AK2/PKR; this interaction inhibits EIF2AK2 and probably allows the virus to evade the innate immune response. Interacts with host CD209/DC-SIGN and CLEC4M/DC-SIGNR. Interact with host SPCS1; this interaction is essential for viral particle assembly. Interacts with protease NS2. The heterodimer E1/E2 interacts with host CLDN1; this interaction plays a role in viral entry into host cell. Part of the viral assembly initiation complex composed of NS2, E1, E2, NS3, NS4A, NS5A and the mature core protein. Interacts with host SLC3A2/4F2hc; the interaction may facilitate viral entry into host cell. Interacts with human PLSCR1. In terms of assembly, homohexamer. Homoheptamer. Interacts with protease NS2. As to quaternary structure, homodimer. Interacts with host SPCS1; this interaction is essential for viral particle assembly. Interacts with envelope glycoprotein E1. Interacts with envelope glycoprotein E2. Interacts with viroporin p7. Interacts with serine protease/helicase NS3. Part of the replication complex composed of NS2, NS3, NS4A, NS4B, NS5A and the RNA-directed RNA polymerase embedded in an ER-derived membranous web. Part of the viral assembly initiation complex composed of NS2, E1, E2, NS3, NS4A, NS5A and the mature core protein. Interacts with protease NS2. Interacts with non-structural protein 4A; this interaction stabilizes the folding of NS3 serine protease. NS3-NS4A interaction is essential for NS3 activation and allows membrane anchorage of the latter. NS3/NS4A complex also prevents phosphorylation of host IRF3, thus preventing the establishment of dsRNA induced antiviral state. Interacts with host MAVS; this interaction leads to the cleavage and inhibition of host MAVS. Interacts with host TICAM1; this interaction leads to the cleavage and inhibition of host TICAM1. Interacts with host TANK-binding kinase/TBK1; this interaction results in the inhibition of the association between TBK1 and IRF3, which leads to the inhibition of IRF3 activation. Interacts with host RBM24. Part of the replication complex composed of NS2, NS3, NS4A, NS4B, NS5A and the RNA-directed RNA polymerase embedded in an ER-derived membranous web. Part of the viral assembly initiation complex composed of NS2, E1, E2, NS3, NS4A, NS5A and the mature core protein. In terms of assembly, interacts with NS3 serine protease; this interaction stabilizes the folding of NS3 serine protease. NS3-NS4A interaction is essential for NS3 activation and allows membrane anchorage of the latter. Interacts with non-structural protein 5A (via N-terminus). Part of the replication complex composed of NS2, NS3, NS4A, NS4B, NS5A and the RNA-directed RNA polymerase embedded in an ER-derived membranous web. Part of the viral assembly initiation complex composed of NS2, E1, E2, NS3, NS4A, NS5A and the mature core protein. As to quaternary structure, homomultimer. Interacts with non-structural protein NS5A. Interacts with host PLA2G4C; this interaction likely initiates the recruitment of replication complexes to lipid droplets. Interacts with host STING; this interaction disrupts the interaction between STING and TBK1 thereby suppressing the interferon signaling. Part of the replication complex composed of NS2, NS3, NS4A, NS4B, NS5A and the RNA-directed RNA polymerase embedded in an ER-derived membranous web. Monomer. Homodimer; dimerization is required for RNA-binding. Interacts with the mature core protein. Interacts (via N-terminus) with non-structural protein 4A. Interacts with non-structural protein 4B. Interacts (via region D2) with RNA-directed RNA polymerase. Part of the viral assembly initiation complex composed of NS2, E1, E2, NS3, NS4A, NS5A and the mature core protein. Part of the replication complex composed of NS2, NS3, NS4A, NS4B, NS5A and the RNA-directed RNA polymerase embedded in an ER-derived membranous web. Interacts with host GRB2. Interacts with host BIN1. Interacts with host PIK3R1. Interacts with host SRCAP. Interacts with host FKBP8. Interacts (via C-terminus) with host VAPB (via MSP domain). Interacts with host EIF2AK2/PKR; this interaction leads to disruption of EIF2AK2 dimerization by NS5A and probably allows the virus to evade the innate immune response. Interacts (via N-terminus) with host PACSIN2 (via N-terminus); this interaction attenuates protein kinase C alpha-mediated phosphorylation of PACSIN2 by disrupting the interaction between PACSIN2 and PRKCA. Interacts (via N-terminus) with host SRC kinase (via SH2 domain). Interacts with most Src-family kinases. Interacts with host IFI27 and SKP2; promotes the ubiquitin-mediated proteasomal degradation of NS5A. Interacts with host GPS2. Interacts with host TNFRSF21; this interaction allows the modulation by the virus of JNK, p38 MAPK, STAT3, and Akt signaling pathways in a DR6-dependent manner. Interacts (via N-terminus) with host CIDEB (via N-terminus); this interaction seems to regulate the association of HCV particles with APOE. Interacts with host CHKA/Choline Kinase-alpha; CHKA bridges host PI4KA and NS5A and potentiates NS5A-stimulated PI4KA activity, which then facilitates the targeting of the ternary complex to the ER for viral replication. Interacts with host SPSB2 (via C-terminus); this interaction targets NS5A for ubiquitination and degradation. Interacts with host RAB18; this interaction may promote the association of NS5A and other replicase components with lipid droplets. Interacts (via region D2) with host PPIA/CYPA; the interaction stimulates RNA-binding ability of NS5A and is dependent on the peptidyl-prolyl cis-trans isomerase activity of PPIA/CYPA. Interacts with host TRIM14; this interaction induces the degradation of NS5A. In terms of assembly, homooligomer. Interacts with non-structural protein 5A. Interacts with host VAPB. Interacts with host PRK2/PKN2. Interacts with host HNRNPA1 and SEPT6; these interactions facilitate viral replication. Part of the replication complex composed of NS2, NS3, NS4A, NS4B, NS5A and the RNA-directed RNA polymerase. The cofactor is Zn(2+). It depends on Mg(2+) as a cofactor. Post-translationally, specific enzymatic cleavages in vivo yield mature proteins. The structural proteins, core, E1, E2 and p7 are produced by proteolytic processing by host signal peptidases. The core protein precursor is synthesized as a 23 kDa, which is retained in the ER membrane through the hydrophobic signal peptide. Cleavage by the signal peptidase releases the 21 kDa mature core protein. The cleavage of the core protein precursor occurs between aminoacids 176 and 188 but the exact cleavage site is not known. Some degraded forms of the core protein appear as well during the course of infection. The other proteins (p7, NS2, NS3, NS4A, NS4B, NS5A and NS5B) are cleaved by the viral proteases. Autoprocessing between NS2 and NS3 is mediated by the NS2 cysteine protease catalytic domain and regulated by the NS3 N-terminal domain. Phosphorylated by host PKC and PKA. In terms of processing, ubiquitinated; mediated by UBE3A and leading to core protein subsequent proteasomal degradation. Post-translationally, highly N-glycosylated. Palmitoylation is required for NS2/3 autoprocessing and E2 recruitment to membranes. In terms of processing, palmitoylated. This modification may play a role in its polymerization or in protein-protein interactions. Post-translationally, phosphorylated on serines in a basal form termed p56. p58 is a hyperphosphorylated form of p56. p56 and p58 coexist in the cell in roughly equivalent amounts. Hyperphosphorylation is dependent on the presence of NS4A. Host CSNK1A1/CKI-alpha or RPS6KB1 kinases may be responsible for NS5A phosphorylation. Tyrosine phosphorylation is essential for the interaction with host SRC. In terms of processing, ubiquitinated. Ubiquitination, most probably at Lys-2350, mediated by host IFI27 and SKP2 leads to proteasomal degradation, restricting viral infection. Ubiquitination by host TRIM22 leads to interruption of viral replication. Post-translationally, the N-terminus is phosphorylated by host PRK2/PKN2.

Its subcellular location is the host endoplasmic reticulum membrane. The protein localises to the host mitochondrion membrane. It is found in the virion. The protein resides in the host cytoplasm. It localises to the host nucleus. Its subcellular location is the host lipid droplet. The protein localises to the virion membrane. It is found in the host mitochondrion. The protein resides in the host cell membrane. It localises to the host perinuclear region. It carries out the reaction Hydrolysis of four peptide bonds in the viral precursor polyprotein, commonly with Asp or Glu in the P6 position, Cys or Thr in P1 and Ser or Ala in P1'.. The enzyme catalyses a ribonucleoside 5'-triphosphate + H2O = a ribonucleoside 5'-diphosphate + phosphate + H(+). It catalyses the reaction ATP + H2O = ADP + phosphate + H(+). The catalysed reaction is RNA(n) + a ribonucleoside 5'-triphosphate = RNA(n+1) + diphosphate. Inhibited by the antiviral drug hexamethylene amiloride. Inhibition by amantadine appears to be genotype-dependent. Also inhibited by long-alkyl-chain iminosugar derivatives. Its activity is regulated as follows. Activity is up-regulated by PRK2/PKN2-mediated phosphorylation. In terms of biological role, packages viral RNA to form a viral nucleocapsid, and promotes virion budding. Participates in the viral particle production as a result of its interaction with the non-structural protein 5A. Binds RNA and may function as a RNA chaperone to induce the RNA structural rearrangements taking place during virus replication. Modulates viral translation initiation by interacting with viral IRES and 40S ribosomal subunit. Affects various cell signaling pathways, host immunity and lipid metabolism. Prevents the establishment of cellular antiviral state by blocking the interferon-alpha/beta (IFN-alpha/beta) and IFN-gamma signaling pathways and by blocking the formation of phosphorylated STAT1 and promoting ubiquitin-mediated proteasome-dependent degradation of STAT1. Activates STAT3 leading to cellular transformation. Regulates the activity of cellular genes, including c-myc and c-fos. May repress the promoter of p53, and sequester CREB3 and SP110 isoform 3/Sp110b in the cytoplasm. Represses cell cycle negative regulating factor CDKN1A, thereby interrupting an important check point of normal cell cycle regulation. Targets transcription factors involved in the regulation of inflammatory responses and in the immune response: suppresses TNF-induced NF-kappa-B activation, and activates AP-1. Binds to dendritic cells (DCs) via C1QR1, resulting in down-regulation of T-lymphocytes proliferation. Alters lipid metabolism by interacting with hepatocellular proteins involved in lipid accumulation and storage. Induces up-regulation of FAS promoter activity, and thereby contributes to the increased triglyceride accumulation in hepatocytes (steatosis). Its function is as follows. Forms a heterodimer with envelope glycoprotein E2, which mediates virus attachment to the host cell, virion internalization through clathrin-dependent endocytosis and fusion with host membrane. Fusion with the host cell is most likely mediated by both E1 and E2, through conformational rearrangements of the heterodimer required for fusion rather than a classical class II fusion mechanism. E1/E2 heterodimer binds host apolipoproteins such as APOB and APOE thereby forming a lipo-viro-particle (LVP). APOE associated to the LVP allows the initial virus attachment to cell surface receptors such as the heparan sulfate proteoglycans (HSPGs), syndecan-1 (SDC1), syndecan-1 (SDC2), the low-density lipoprotein receptor (LDLR) and scavenger receptor class B type I (SCARB1). The cholesterol transfer activity of SCARB1 allows E2 exposure and binding of E2 to SCARB1 and the tetraspanin CD81. E1/E2 heterodimer binding on CD81 activates the epithelial growth factor receptor (EGFR) signaling pathway. Diffusion of the complex E1-E2-EGFR-SCARB1-CD81 to the cell lateral membrane allows further interaction with Claudin 1 (CLDN1) and occludin (OCLN) to finally trigger HCV entry. Forms a heterodimer with envelope glycoprotein E1, which mediates virus attachment to the host cell, virion internalization through clathrin-dependent endocytosis and fusion with host membrane. Fusion with the host cell is most likely mediated by both E1 and E2, through conformational rearrangements of the heterodimer required for fusion rather than a classical class II fusion mechanism. The interaction between envelope glycoprotein E2 and host apolipoprotein E/APOE allows the proper assembly, maturation and infectivity of the viral particles. This interaction is probably promoted via the up-regulation of cellular autophagy by the virus. E1/E2 heterodimer binds host apolipoproteins such as APOB and APOE thereby forming a lipo-viro-particle (LVP). APOE associated to the LVP allows the initial virus attachment to cell surface receptors such as the heparan sulfate proteoglycans (HSPGs), syndecan-1 (SDC1), syndecan-1 (SDC2), the low-density lipoprotein receptor (LDLR) and scavenger receptor class B type I (SCARB1). The cholesterol transfer activity of SCARB1 allows E2 exposure and binding of E2 to SCARB1 and the tetraspanin CD81. E1/E2 heterodimer binding on CD81 activates the epithelial growth factor receptor (EGFR) signaling pathway. Diffusion of the complex E1-E2-EGFR-SCARB1-CD81 to the cell lateral membrane allows further interaction with Claudin 1 (CLDN1) and occludin (OCLN) to finally trigger HCV entry. Inhibits host EIF2AK2/PKR activation, preventing the establishment of an antiviral state. Viral ligand for CD209/DC-SIGN and CLEC4M/DC-SIGNR, which are respectively found on dendritic cells (DCs), and on liver sinusoidal endothelial cells and macrophage-like cells of lymph node sinuses. These interactions allow the capture of circulating HCV particles by these cells and subsequent facilitated transmission to permissive cells such as hepatocytes and lymphocyte subpopulations. The interaction between E2 and host amino acid transporter complex formed by SLC3A2 and SLC7A5/LAT1 may facilitate viral entry into host cell. Functionally, ion channel protein that acts as a viroporin and plays an essential role in the assembly, envelopment and secretion of viral particles. Regulates the host cell secretory pathway, which induces the intracellular retention of viral glycoproteins and favors assembly of viral particles. Creates a pore in acidic organelles and releases Ca(2+) and H(+) in the cytoplasm of infected cells, leading to a productive viral infection. High levels of cytoplasmic Ca(2+) may trigger membrane trafficking and transport of viral ER-associated proteins to viroplasms, sites of viral genome replication. This ionic imbalance induces the assembly of the inflammasome complex, which triggers the maturation of pro-IL-1beta into IL-1beta through the action of caspase-1. Targets also host mitochondria and induces mitochondrial depolarization. In addition of its role as a viroporin, acts as a lipid raft adhesion factor. In terms of biological role, cysteine protease required for the proteolytic auto-cleavage between the non-structural proteins NS2 and NS3. The N-terminus of NS3 is required for the function of NS2 protease (active region NS2-3). Promotes the initiation of viral particle assembly by mediating the interaction between structural and non-structural proteins. Its function is as follows. Displays three enzymatic activities: serine protease with a chymotrypsin-like fold, NTPase and RNA helicase. NS3 serine protease, in association with NS4A, is responsible for the cleavages of NS3-NS4A, NS4A-NS4B, NS4B-NS5A and NS5A-NS5B. The NS3/NS4A complex prevents phosphorylation of host IRF3, thus preventing the establishment of dsRNA induced antiviral state. The NS3/NS4A complex induces host amino acid transporter component SLC3A2, thus contributing to HCV propagation. NS3 RNA helicase binds to RNA and unwinds both dsDNA and dsRNA in the 3' to 5' direction, and likely resolves RNA complicated stable secondary structures in the template strand. Binds a single ATP and catalyzes the unzipping of a single base pair of dsRNA. Inhibits host antiviral proteins TBK1 and IRF3 thereby preventing the establishment of an antiviral state. Cleaves host MAVS/CARDIF thereby preventing the establishment of an antiviral state. Cleaves host TICAM1/TRIF, thereby disrupting TLR3 signaling and preventing the establishment of an antiviral state. Peptide cofactor which forms a non-covalent complex with the N-terminal of NS3 serine protease. The NS3/NS4A complex prevents phosphorylation of host IRF3, thus preventing the establishment of dsRNA induced antiviral state. The NS3/NS4A complex induces host amino acid transporter component SLC3A2, thus contributing to HCV propagation. Functionally, induces a specific membrane alteration that serves as a scaffold for the virus replication complex. This membrane alteration gives rise to the so-called ER-derived membranous web that contains the replication complex. NS4B self-interaction contributes to its function in membranous web formation. Promotes host TRIF protein degradation in a CASP8-dependent manner thereby inhibiting host TLR3-mediated interferon signaling. Disrupts the interaction between STING and TBK1 contributing to the inhibition of interferon signaling. In terms of biological role, phosphorylated protein that is indispensable for viral replication and assembly. Both hypo- and hyperphosphorylated states are required for the viral life cycle. The hyperphosphorylated form of NS5A is an inhibitor of viral replication. Involved in RNA-binding and especially in binding to the viral genome. Zinc is essential for RNA-binding. Participates in the viral particle production as a result of its interaction with the mature viral core protein. Its interaction with host VAPB may target the viral replication complex to vesicles. Down-regulates viral IRES translation initiation. Mediates interferon resistance, presumably by interacting with and inhibiting host EIF2AK2/PKR. Prevents BIN1-induced apoptosis. Acts as a transcriptional activator of some host genes important for viral replication when localized in the nucleus. Via the interaction with host PACSIN2, modulates lipid droplet formation in order to promote virion assembly. Modulates TNFRSF21/DR6 signaling pathway for viral propagation. Its function is as follows. RNA-dependent RNA polymerase that performs primer-template recognition and RNA synthesis during viral replication. Initiates RNA transcription/replication at a flavin adenine dinucleotide (FAD), resulting in a 5'- FAD cap on viral RNAs. In this way, recognition of viral 5' RNA by host pattern recognition receptors can be bypassed, thereby evading activation of antiviral pathways. This chain is Genome polyprotein, found in Homo sapiens (Human).